A 653-amino-acid polypeptide reads, in one-letter code: Fidgetin-like protein 2 (653 aa).

3 disordered regions span residues 1-36, 86-129, and 216-240; these read MHWT…ELPP, ASFL…SGAL, and YGAL…APTP. The segment covering 10–27 has biased composition (polar residues); the sequence is PLNQWPEQHLDVSSTTPS. The span at 97–107 shows a compositional bias: pro residues; it reads EPWPGPEPPYP. Gly residues predominate over residues 119–129; the sequence is KSGGGGGSGAL. Pro residues predominate over residues 219-240; it reads LPPPPGPPPAPYLTPGLPAPTP. Residues alanine 395 and 435–440 each bind ATP; that span reads GAGKAL.

This sequence belongs to the AAA ATPase family. Mg(2+) is required as a cofactor.

The protein localises to the cytoplasm. It is found in the cell cortex. The catalysed reaction is ATP + H2O = ADP + phosphate + H(+). Microtubule-severing enzyme that negatively regulates cell migration and wound healing. In migrating cells, targets dynamic microtubules (MTs) at the leading edge and severs them, thereby suppressing motility. Microtubule severing releases ARHGEF2 which activates RHOA, which in turn regulates focal ahesion turnover via focal adhesion kinase, as opposed to F-actin polymerization, to suppress cell motility. Negative regulator of axon regeneration that suppresses axonal growth by selectively severing dynamic MTs in the distal axon shaft and growth cone. Contributes to proper cell branching during endothelial and neuronal development. The sequence is that of Fidgetin-like protein 2 from Homo sapiens (Human).